Here is a 264-residue protein sequence, read N- to C-terminus: 3-methyl-2-oxobutanoate hydroxymethyltransferase (264 aa).

Residues D45 and D84 each coordinate Mg(2+). 3-methyl-2-oxobutanoate contacts are provided by residues D45–S46, D84, and K112. E114 lines the Mg(2+) pocket. E181 functions as the Proton acceptor in the catalytic mechanism.

It belongs to the PanB family. In terms of assembly, homodecamer; pentamer of dimers. It depends on Mg(2+) as a cofactor.

The protein resides in the cytoplasm. The catalysed reaction is 3-methyl-2-oxobutanoate + (6R)-5,10-methylene-5,6,7,8-tetrahydrofolate + H2O = 2-dehydropantoate + (6S)-5,6,7,8-tetrahydrofolate. Its pathway is cofactor biosynthesis; (R)-pantothenate biosynthesis; (R)-pantoate from 3-methyl-2-oxobutanoate: step 1/2. In terms of biological role, catalyzes the reversible reaction in which hydroxymethyl group from 5,10-methylenetetrahydrofolate is transferred onto alpha-ketoisovalerate to form ketopantoate. The protein is 3-methyl-2-oxobutanoate hydroxymethyltransferase of Photobacterium profundum (strain SS9).